We begin with the raw amino-acid sequence, 331 residues long: Ferredoxin--NADP reductase (331 aa).

FAD-binding residues include T14, E33, Q41, Y46, V86, F120, D284, and S327.

It belongs to the ferredoxin--NADP reductase type 2 family. As to quaternary structure, homodimer. The cofactor is FAD.

It carries out the reaction 2 reduced [2Fe-2S]-[ferredoxin] + NADP(+) + H(+) = 2 oxidized [2Fe-2S]-[ferredoxin] + NADPH. This Picrophilus torridus (strain ATCC 700027 / DSM 9790 / JCM 10055 / NBRC 100828 / KAW 2/3) protein is Ferredoxin--NADP reductase.